A 336-amino-acid chain; its full sequence is UPF0284 protein PYRAB00380 (336 aa).

This sequence belongs to the UPF0284 family.

In Pyrococcus abyssi (strain GE5 / Orsay), this protein is UPF0284 protein PYRAB00380.